The following is a 695-amino-acid chain: HIPL1 protein (695 aa).

Positions 1–23 (MKLHQFLVFLFLFLSCFALSSWA) are cleaved as a signal peptide. 15 N-linked (GlcNAc...) asparagine glycosylation sites follow: Asn37, Asn67, Asn107, Asn113, Asn128, Asn151, Asn175, Asn190, Asn208, Asn337, Asn429, Asn511, Asn527, Asn641, and Asn648. A lipid anchor (GPI-anchor amidated serine) is attached at Ser665. A propeptide spans 666-695 (SSCYKHINGFHGSLVVLFVSLSLILLGLLN) (removed in mature form).

The protein belongs to the PQQ oxidoreductase GdhB family. The cofactor is pyrroloquinoline quinone.

It is found in the cell membrane. In Arabidopsis thaliana (Mouse-ear cress), this protein is HIPL1 protein (HIPL1).